Consider the following 201-residue polypeptide: dCTP deaminase, dUMP-forming (201 aa).

Residues 101–106, aspartate 119, 127–129, glutamine 148, tyrosine 162, and glutamine 174 contribute to the dCTP site; these read KSSLGR and TLE. The active-site Proton donor/acceptor is the glutamate 129. Residues 166-183 are compositionally biased toward polar residues; that stretch reads EYSSRYQGQRGPTASRSF. Residues 166 to 201 are disordered; it reads EYSSRYQGQRGPTASRSFLNFHRTDVSGTEAGRSSS.

This sequence belongs to the dCTP deaminase family. In terms of assembly, homotrimer.

The enzyme catalyses dCTP + 2 H2O = dUMP + NH4(+) + diphosphate. It participates in pyrimidine metabolism; dUMP biosynthesis; dUMP from dCTP: step 1/1. Bifunctional enzyme that catalyzes both the deamination of dCTP to dUTP and the hydrolysis of dUTP to dUMP without releasing the toxic dUTP intermediate. This is dCTP deaminase, dUMP-forming from Leifsonia xyli subsp. xyli (strain CTCB07).